The following is a 150-amino-acid chain: D-aminoacyl-tRNA deacylase (150 aa).

Positions 136–137 (GP) match the Gly-cisPro motif, important for rejection of L-amino acids motif.

This sequence belongs to the DTD family. As to quaternary structure, homodimer.

It localises to the cytoplasm. It catalyses the reaction glycyl-tRNA(Ala) + H2O = tRNA(Ala) + glycine + H(+). The enzyme catalyses a D-aminoacyl-tRNA + H2O = a tRNA + a D-alpha-amino acid + H(+). An aminoacyl-tRNA editing enzyme that deacylates mischarged D-aminoacyl-tRNAs. Also deacylates mischarged glycyl-tRNA(Ala), protecting cells against glycine mischarging by AlaRS. Acts via tRNA-based rather than protein-based catalysis; rejects L-amino acids rather than detecting D-amino acids in the active site. By recycling D-aminoacyl-tRNA to D-amino acids and free tRNA molecules, this enzyme counteracts the toxicity associated with the formation of D-aminoacyl-tRNA entities in vivo and helps enforce protein L-homochirality. In Staphylococcus epidermidis (strain ATCC 35984 / DSM 28319 / BCRC 17069 / CCUG 31568 / BM 3577 / RP62A), this protein is D-aminoacyl-tRNA deacylase.